We begin with the raw amino-acid sequence, 360 residues long: Peptide chain release factor 1 (360 aa).

Gln237 is modified (N5-methylglutamine).

The protein belongs to the prokaryotic/mitochondrial release factor family. In terms of processing, methylated by PrmC. Methylation increases the termination efficiency of RF1.

Its subcellular location is the cytoplasm. Functionally, peptide chain release factor 1 directs the termination of translation in response to the peptide chain termination codons UAG and UAA. This is Peptide chain release factor 1 from Pseudomonas fluorescens (strain SBW25).